Consider the following 191-residue polypeptide: Fe/S biogenesis protein NfuA (191 aa).

[4Fe-4S] cluster is bound by residues Cys-149 and Cys-152.

This sequence belongs to the NfuA family. In terms of assembly, homodimer. It depends on [4Fe-4S] cluster as a cofactor.

In terms of biological role, involved in iron-sulfur cluster biogenesis. Binds a 4Fe-4S cluster, can transfer this cluster to apoproteins, and thereby intervenes in the maturation of Fe/S proteins. Could also act as a scaffold/chaperone for damaged Fe/S proteins. The chain is Fe/S biogenesis protein NfuA from Enterobacter sp. (strain 638).